The sequence spans 210 residues: Probable septum site-determining protein MinC (210 aa).

Belongs to the MinC family. As to quaternary structure, interacts with MinD and FtsZ.

In terms of biological role, cell division inhibitor that blocks the formation of polar Z ring septums. Rapidly oscillates between the poles of the cell to destabilize FtsZ filaments that have formed before they mature into polar Z rings. Prevents FtsZ polymerization. The protein is Probable septum site-determining protein MinC of Thermotoga neapolitana (strain ATCC 49049 / DSM 4359 / NBRC 107923 / NS-E).